We begin with the raw amino-acid sequence, 421 residues long: C2H2 type master regulator of conidiophore development brlA (421 aa).

2 consecutive C2H2-type zinc fingers follow at residues 309-333 (FKCKEPGCKGRFKRQEHLKRHMKSH) and 339-364 (HVCWVPGCERAFSRSDNLNAHYTKTH). The tract at residues 379 to 421 (ESSPDYDPDFRGQLTPDGLPIRGSTLDDPMPNSREYSVDGLDD) is disordered.

It is found in the nucleus. BrlA, abaA and wetA are pivotal regulators of conidiophore development and conidium maturation. They act individually and together to regulate their own expression and that of numerous other sporulation-specific genes. Binds promoters of target genes at brlA response elements (BREs) containing the conserved sequence 5'-(C/A)(A/G)AGGG(G/A)-3'. Required for conidiophores formation. Controls expression of abaA. The protein is C2H2 type master regulator of conidiophore development brlA of Aspergillus oryzae (strain ATCC 42149 / RIB 40) (Yellow koji mold).